We begin with the raw amino-acid sequence, 831 residues long: Periplasmic nitrate reductase (831 aa).

The tat-type signal signal peptide spans 1-29 (MKVSRRDFIKQTAIAATASVAGIPLGTEA). The 4Fe-4S Mo/W bis-MGD-type domain occupies 41–97 (LKWSKAPCRFCGTGCGVTVAVRDNKVVATQGDPQCEVNKGLNCVKGYFLSKIMYGQD). Residues Cys-48, Cys-51, Cys-55, and Cys-83 each coordinate [4Fe-4S] cluster. Mo-bis(molybdopterin guanine dinucleotide) contacts are provided by residues Lys-85, Gln-152, Asn-177, Cys-181, 214-221 (WGSNMAEM), 245-249 (STFTH), 264-266 (QTD), Met-375, Gln-379, Asn-485, 511-512 (SD), Lys-534, Asp-561, and 721-730 (TGRVLEHWHS). Residue Trp-797 coordinates substrate. 2 residues coordinate Mo-bis(molybdopterin guanine dinucleotide): Asn-805 and Lys-822.

It belongs to the prokaryotic molybdopterin-containing oxidoreductase family. NasA/NapA/NarB subfamily. As to quaternary structure, component of the periplasmic nitrate reductase NapAB complex composed of NapA and NapB. It depends on [4Fe-4S] cluster as a cofactor. Requires Mo-bis(molybdopterin guanine dinucleotide) as cofactor. Post-translationally, predicted to be exported by the Tat system. The position of the signal peptide cleavage has not been experimentally proven.

It is found in the periplasm. The catalysed reaction is 2 Fe(II)-[cytochrome] + nitrate + 2 H(+) = 2 Fe(III)-[cytochrome] + nitrite + H2O. Its function is as follows. Catalytic subunit of the periplasmic nitrate reductase complex NapAB. Receives electrons from NapB and catalyzes the reduction of nitrate to nitrite. The chain is Periplasmic nitrate reductase from Cupriavidus pinatubonensis (strain JMP 134 / LMG 1197) (Cupriavidus necator (strain JMP 134)).